The primary structure comprises 60 residues: Truncated protein A35 homolog (60 aa).

Belongs to the chordopoxvirinae A35 protein family.

This chain is Truncated protein A35 homolog (A38R), found in Variola virus (isolate Human/India/Ind3/1967) (VARV).